Reading from the N-terminus, the 157-residue chain is 6,7-dimethyl-8-ribityllumazine synthase (157 aa).

5-amino-6-(D-ribitylamino)uracil contacts are provided by residues Phe26, 60 to 62 (ALE), and 86 to 88 (AVI). 91–92 (ET) lines the (2S)-2-hydroxy-3-oxobutyl phosphate pocket. His94 functions as the Proton donor in the catalytic mechanism. Position 119 (Asn119) interacts with 5-amino-6-(D-ribitylamino)uracil. Arg133 contacts (2S)-2-hydroxy-3-oxobutyl phosphate.

This sequence belongs to the DMRL synthase family.

It carries out the reaction (2S)-2-hydroxy-3-oxobutyl phosphate + 5-amino-6-(D-ribitylamino)uracil = 6,7-dimethyl-8-(1-D-ribityl)lumazine + phosphate + 2 H2O + H(+). It participates in cofactor biosynthesis; riboflavin biosynthesis; riboflavin from 2-hydroxy-3-oxobutyl phosphate and 5-amino-6-(D-ribitylamino)uracil: step 1/2. Catalyzes the formation of 6,7-dimethyl-8-ribityllumazine by condensation of 5-amino-6-(D-ribitylamino)uracil with 3,4-dihydroxy-2-butanone 4-phosphate. This is the penultimate step in the biosynthesis of riboflavin. The chain is 6,7-dimethyl-8-ribityllumazine synthase from Laribacter hongkongensis (strain HLHK9).